Consider the following 290-residue polypeptide: RWD domain-containing protein 2B (290 aa).

An RWD domain is found at 12–136 (SELDLLASMF…EWVKEHAFDY (125 aa)).

The chain is RWD domain-containing protein 2B (Rwdd2b) from Mus musculus (Mouse).